A 610-amino-acid polypeptide reads, in one-letter code: Dopamine beta-hydroxylase (610 aa).

The Cytoplasmic portion of the chain corresponds to 1–9 (MKVPSPSVR). A helical; Signal-anchor for type II membrane protein membrane pass occupies residues 10–30 (EAASMYGTAVAIFLVILVAAL). Topologically, residues 31-610 (QGSEPPESPF…TVVDIGGGKG (580 aa)) are intragranular. In terms of domain architecture, DOMON spans 50–166 (GTLELSWNVS…GTVHLVYGIL (117 aa)). N-linked (GlcNAc...) asparagine glycans are attached at residues Asn57, Asn177, and Asn194. 6 disulfide bridges follow: Cys147-Cys589, Cys225-Cys276, Cys262-Cys288, Cys383-Cys496, Cys387-Cys558, and Cys459-Cys481. Tyr223 is an active-site residue. Residues His255 and His256 each coordinate Cu(2+). His326, His405, His407, and Met480 together coordinate Cu(2+). His405 is an active-site residue. Residues 586 to 610 (TPRCPASRGRSPAGPTVVDIGGGKG) are disordered.

This sequence belongs to the copper type II ascorbate-dependent monooxygenase family. As to quaternary structure, homotetramer; composed of two disulfide-linked dimers. Cu(2+) serves as cofactor. In terms of processing, proteolytic cleavage after the membrane-anchor leads to the release of the soluble form. Post-translationally, N-glycosylated. In terms of tissue distribution, detected in adrenal medulla chromaffin cells.

The protein resides in the cytoplasmic vesicle. It localises to the secretory vesicle lumen. It is found in the secretory vesicle. The protein localises to the chromaffin granule lumen. Its subcellular location is the secreted. The protein resides in the secretory vesicle membrane. It localises to the chromaffin granule membrane. The enzyme catalyses dopamine + 2 L-ascorbate + O2 = (R)-noradrenaline + 2 monodehydro-L-ascorbate radical + H2O. It participates in catecholamine biosynthesis; (R)-noradrenaline biosynthesis; (R)-noradrenaline from dopamine: step 1/1. Its function is as follows. Catalyzes the hydroxylation of dopamine to noradrenaline (also known as norepinephrine), and is thus vital for regulation of these neurotransmitters. The polypeptide is Dopamine beta-hydroxylase (DBH) (Equus caballus (Horse)).